Consider the following 138-residue polypeptide: MTKPIPRIGSRKNGRISSRKNGRRIPKGVIHVQASFNNTIVTVTDVRGRVVSWSSAGTSGFRGTRRGTPFAAQTAAGNAIRTVVDQGMQRAEVMIKGPGLGRDAALRAIRRSGLLLSFVRDVTPMPHNGCRPPKKRRV.

The segment at 1 to 24 is disordered; the sequence is MTKPIPRIGSRKNGRISSRKNGRR. Residues 9–24 are compositionally biased toward basic residues; it reads GSRKNGRISSRKNGRR.

This sequence belongs to the universal ribosomal protein uS11 family. In terms of assembly, part of the 30S ribosomal subunit.

Its subcellular location is the plastid. It is found in the chloroplast. This is Small ribosomal subunit protein uS11c from Chloranthus spicatus (Chulantree).